We begin with the raw amino-acid sequence, 648 residues long: 1-deoxy-D-xylulose-5-phosphate synthase (648 aa).

Thiamine diphosphate contacts are provided by residues His72 and 113-115; that span reads GHA. Mg(2+) is bound at residue Asp144. Thiamine diphosphate-binding positions include 145-146, Asn173, and Glu363; that span reads GA. Asn173 is a binding site for Mg(2+).

The protein belongs to the transketolase family. DXPS subfamily. Homodimer. Mg(2+) serves as cofactor. The cofactor is thiamine diphosphate.

It carries out the reaction D-glyceraldehyde 3-phosphate + pyruvate + H(+) = 1-deoxy-D-xylulose 5-phosphate + CO2. It functions in the pathway metabolic intermediate biosynthesis; 1-deoxy-D-xylulose 5-phosphate biosynthesis; 1-deoxy-D-xylulose 5-phosphate from D-glyceraldehyde 3-phosphate and pyruvate: step 1/1. Catalyzes the acyloin condensation reaction between C atoms 2 and 3 of pyruvate and glyceraldehyde 3-phosphate to yield 1-deoxy-D-xylulose-5-phosphate (DXP). This is 1-deoxy-D-xylulose-5-phosphate synthase from Symbiobacterium thermophilum (strain DSM 24528 / JCM 14929 / IAM 14863 / T).